We begin with the raw amino-acid sequence, 224 residues long: Type VII secretion system protein EsaE (224 aa).

In terms of assembly, interacts with EssD.

Component of the type VII secretion system (Ess). Plays a role in Esx protein secretion. Plays an essential role in the processing and secretion of EssD. The protein is Type VII secretion system protein EsaE of Staphylococcus aureus (strain USA300).